The primary structure comprises 163 residues: Phosphopantetheine adenylyltransferase (163 aa).

Residue threonine 10 participates in substrate binding. Residues 10 to 11 (TF) and histidine 18 each bind ATP. 3 residues coordinate substrate: lysine 42, leucine 74, and arginine 88. Residues 89–91 (GLR), glutamate 99, and 124–130 (NSFISST) contribute to the ATP site.

It belongs to the bacterial CoaD family. As to quaternary structure, homohexamer. Mg(2+) serves as cofactor.

The protein resides in the cytoplasm. It catalyses the reaction (R)-4'-phosphopantetheine + ATP + H(+) = 3'-dephospho-CoA + diphosphate. It functions in the pathway cofactor biosynthesis; coenzyme A biosynthesis; CoA from (R)-pantothenate: step 4/5. Its function is as follows. Reversibly transfers an adenylyl group from ATP to 4'-phosphopantetheine, yielding dephospho-CoA (dPCoA) and pyrophosphate. In Shewanella baltica (strain OS155 / ATCC BAA-1091), this protein is Phosphopantetheine adenylyltransferase.